A 203-amino-acid polypeptide reads, in one-letter code: High frequency lysogenization protein HflD homolog (203 aa).

It belongs to the HflD family.

Its subcellular location is the cytoplasm. The protein resides in the cell inner membrane. This chain is High frequency lysogenization protein HflD homolog, found in Aeromonas salmonicida (strain A449).